The sequence spans 231 residues: Cytidylate kinase (231 aa).

18-26 (GPSGTGKSS) is a binding site for ATP.

Belongs to the cytidylate kinase family. Type 1 subfamily.

It localises to the cytoplasm. The enzyme catalyses CMP + ATP = CDP + ADP. It catalyses the reaction dCMP + ATP = dCDP + ADP. The sequence is that of Cytidylate kinase from Streptomyces avermitilis (strain ATCC 31267 / DSM 46492 / JCM 5070 / NBRC 14893 / NCIMB 12804 / NRRL 8165 / MA-4680).